Reading from the N-terminus, the 118-residue chain is TVDVTACAPGLAIPAPPLPTCRTFARPRTCGLGGPYGPVDPSPVLKQRCCRELAAVPSRCRCAALGFMMDGVDAPLQDFRGCTREMQRIYAVSRLTRAAECNLPTIPGGGCHLSNSPR.

4 disulfide bridges follow: C7-C60, C21-C49, C30-C82, and C50-C101.

It belongs to the protease inhibitor I6 (cereal trypsin/alpha-amylase inhibitor) family.

The protein localises to the secreted. Its function is as follows. Alpha-amylase inhibitor. This Sorghum bicolor (Sorghum) protein is Alpha-amylase inhibitor 4.